The sequence spans 385 residues: Transmembrane protein 271 (385 aa).

Transmembrane regions (helical) follow at residues 9-29 and 50-70; these read CAAL…AVGL and GAFY…AALL. Residues 83–111 are disordered; the sequence is EPGPGLGVPAAPAGAPEATPGESGAAAGA. Residues 121–141 traverse the membrane as a helical segment; the sequence is LLLGVLVFMLGVLSAFAGAVI. The interval 160 to 203 is disordered; sequence PRAPGSSPGSAPGSTPGSAPGSAPGSAPGSAPGAPRARSTLDSA. Positions 163–197 are enriched in low complexity; it reads PGSSPGSAPGSTPGSAPGSAPGSAPGSAPGAPRAR. The chain crosses the membrane as a helical span at residues 219-239; that stretch reads VLSTVFNSLECLLGLLSLLLV. The disordered stretch occupies residues 245–305; that stretch reads SQARRGRRGR…SEASILSPEE (61 aa). Residues 246–258 are compositionally biased toward basic residues; the sequence is QARRGRRGRRRGG. A compositionally biased stretch (low complexity) spans 259–277; the sequence is RALARPRGGSGLRAQPPAS. A compositionally biased stretch (basic residues) spans 278 to 292; it reads RARRGRRGRRGRRLQ.

The protein localises to the membrane. The chain is Transmembrane protein 271 from Homo sapiens (Human).